A 224-amino-acid chain; its full sequence is UPF0758 protein Pfl01_5539 (224 aa).

Positions 102–224 (ALENPQVVRD…PLSMAECGWM (123 aa)) constitute an MPN domain. 3 residues coordinate Zn(2+): H173, H175, and D186. Residues 173–186 (HNHPSGNSDPSQAD) carry the JAMM motif motif.

Belongs to the UPF0758 family.

This chain is UPF0758 protein Pfl01_5539, found in Pseudomonas fluorescens (strain Pf0-1).